The following is a 408-amino-acid chain: uncharacterized protein (408 aa).

Helical transmembrane passes span Trp9 to Phe29, Val49 to Ile69, Ile77 to Asn97, Val100 to Thr120, Leu135 to Trp155, Thr167 to Met187, Leu216 to Ala236, Gly252 to Ser272, Ser283 to Ile303, Leu308 to Thr328, Leu340 to Val360, and Tyr373 to Val393.

The protein belongs to the major facilitator superfamily.

It localises to the cell membrane. This is an uncharacterized protein from Bacillus subtilis (strain 168).